We begin with the raw amino-acid sequence, 568 residues long: UPF0313 protein FN0734 (568 aa).

One can recognise a Radical SAM core domain in the interval 289–562 (ALDTIKYSVT…KQKQKDIVTE (274 aa)). The [4Fe-4S] cluster site is built by Cys303, Cys307, and Cys310. The interval 546-568 (VEKDNGKKQKQKDIVTEKRKNRK) is disordered.

It belongs to the UPF0313 family. Requires [4Fe-4S] cluster as cofactor.

The polypeptide is UPF0313 protein FN0734 (Fusobacterium nucleatum subsp. nucleatum (strain ATCC 25586 / DSM 15643 / BCRC 10681 / CIP 101130 / JCM 8532 / KCTC 2640 / LMG 13131 / VPI 4355)).